We begin with the raw amino-acid sequence, 410 residues long: MNPQLNNLTLPIYMDYQATTPIDPRVMEAMLPYFTTKFGNPHSRSHSFGWEAENAVEEARSMVAKLIGADTKEIIFTSGATESNNLAIKGIAKFYSNKKNHIITVVSEHKCVLDACRHLEQEGIKITYLPIKPNGIIDLETLKNAITDQTMLVSVMVVNNEIGVVQPLKEIGKICREKGVFFHSDIAQGFGKIPIDVNAFNIDLASISGHKIYGPKGIGALYVRKKPRVRVTPLINGGGQERGMRSGTLPTPLIVGLGMAAEIAYSEMEKDTKHVNYLFDRFLNNIHKRISEVYLNGDKNQRYKGNLNLSFAGVEGESMILAIKDLAVSSGSACTSASLEPSYVLRSMGIGEELAHTAIRFGIGRFTTEQEVDYAVNLICSKIDKLRELSPLWEMMQEGIDLKKIKWAVH.

Pyridoxal 5'-phosphate contacts are provided by residues 80–81, asparagine 160, glutamine 188, and 208–210; these read AT and SGH. Lysine 211 bears the N6-(pyridoxal phosphate)lysine mark. Threonine 248 is a binding site for pyridoxal 5'-phosphate. Cysteine 334 (cysteine persulfide intermediate) is an active-site residue. Residue cysteine 334 participates in [2Fe-2S] cluster binding.

Belongs to the class-V pyridoxal-phosphate-dependent aminotransferase family. NifS/IscS subfamily. As to quaternary structure, homodimer. Forms a heterotetramer with IscU, interacts with other sulfur acceptors. Requires pyridoxal 5'-phosphate as cofactor.

It is found in the cytoplasm. The catalysed reaction is (sulfur carrier)-H + L-cysteine = (sulfur carrier)-SH + L-alanine. It functions in the pathway cofactor biosynthesis; iron-sulfur cluster biosynthesis. Functionally, master enzyme that delivers sulfur to a number of partners involved in Fe-S cluster assembly, tRNA modification or cofactor biosynthesis. Catalyzes the removal of elemental sulfur atoms from cysteine to produce alanine. Functions as a sulfur delivery protein for Fe-S cluster synthesis onto IscU, an Fe-S scaffold assembly protein, as well as other S acceptor proteins. This is Cysteine desulfurase IscS from Rickettsia conorii (strain ATCC VR-613 / Malish 7).